We begin with the raw amino-acid sequence, 126 residues long: MKQSVKKPPPPGDTTVRGELPNGKLEEAPPPVLPPPPRPMADKDTSNESSSGSATQNTKERPPTELSTTEATTPATPAPPLQPRTLNPASKWSKIQIVTKQTGNECVTAIEIVPATPAGMRPAANV.

The interval 1–90 (MKQSVKKPPP…LQPRTLNPAS (90 aa)) is disordered. At 1–126 (MKQSVKKPPP…PAGMRPAANV (126 aa)) the chain is on the cytoplasmic side. A compositionally biased stretch (pro residues) spans 28–39 (APPPVLPPPPRP). Polar residues predominate over residues 47–57 (NESSSGSATQN). The segment covering 64–75 (TELSTTEATTPA) has biased composition (low complexity).

The protein belongs to the G-protein coupled receptor 1 family. Muscarinic acetylcholine receptor subfamily. CHRM4 sub-subfamily.

The protein resides in the cell membrane. It is found in the postsynaptic cell membrane. The muscarinic acetylcholine receptor mediates various cellular responses, including inhibition of adenylate cyclase, breakdown of phosphoinositides and modulation of potassium channels through the action of G proteins. Primary transducing effect is inhibition of adenylate cyclase. May couple to multiple functional responses in cell lines. The polypeptide is Muscarinic acetylcholine receptor M4 (CHRM4) (Bos taurus (Bovine)).